Consider the following 60-residue polypeptide: Large ribosomal subunit protein uL30 (60 aa).

Belongs to the universal ribosomal protein uL30 family. Part of the 50S ribosomal subunit.

This Limosilactobacillus reuteri (strain DSM 20016) (Lactobacillus reuteri) protein is Large ribosomal subunit protein uL30.